Consider the following 300-residue polypeptide: Cation-efflux pump FieF (300 aa).

Residues 24–44 (LLIKIFAWWYTGSVSILAALV) traverse the membrane as a helical segment. The Zn(2+) site is built by aspartate 45 and aspartate 49. Transmembrane regions (helical) follow at residues 82–102 (AALA…LTSI) and 114–134 (PGVG…LVTF). Zn(2+)-binding residues include histidine 153 and aspartate 157. Transmembrane regions (helical) follow at residues 156 to 176 (SDVM…YGWH) and 178 to 198 (ADAL…LRMG).

The protein belongs to the cation diffusion facilitator (CDF) transporter (TC 2.A.4) family. FieF subfamily. In terms of assembly, homodimer.

It localises to the cell inner membrane. It carries out the reaction Zn(2+)(in) + H(+)(out) = Zn(2+)(out) + H(+)(in). The catalysed reaction is Cd(2+)(in) + H(+)(out) = Cd(2+)(out) + H(+)(in). It catalyses the reaction Fe(2+)(in) + H(+)(out) = Fe(2+)(out) + H(+)(in). Divalent metal cation transporter which exports Zn(2+), Cd(2+) and possibly Fe(2+). May be involved in zinc and iron detoxification by efflux. This is Cation-efflux pump FieF from Salmonella enteritidis PT4 (strain P125109).